The following is a 575-amino-acid chain: Developmental and secondary metabolism regulator VEL1 (575 aa).

One can recognise a Velvet domain in the interval 21-225 (GRKLKYTLTV…AEQGCRVRIR (205 aa)). The short motif at 35-40 (ERARAC) is the Nuclear localization signal element. Disordered stretches follow at residues 36-56 (RARACGSGAKSSADRRPVDPP) and 227-402 (DVRM…QSYE). Residues 274 to 284 (VHEDPQQRRGS) are compositionally biased toward basic and acidic residues. Positions 294-308 (VVNTPFRTPSISPST) are enriched in polar residues. Over residues 334-346 (IQPPHPPPPPPSS) the composition is skewed to pro residues. Polar residues-rich tracts occupy residues 355–365 (HHNQGPSTQFR) and 385–402 (SYSQFRPPTNPSQQQSYE). Residues 465–509 (AEQPLAMSPLASVTSISRGTQNSAPMPSHNYNKLERSGSYSQYAP) form a PEST region. Residues 513–549 (EAPKSTNKRSFNDVFSTPTESLSNGRRPSAIGIDIEE) form a disordered region. Polar residues predominate over residues 516–538 (KSTNKRSFNDVFSTPTESLSNGR).

It belongs to the velvet family. VeA subfamily. As to quaternary structure, component of the heterotrimeric velvet complex composed of LAE1, VEL1 and VEL2; VEL1 acting as a bridging protein between LAE1 and VEL2.

It is found in the nucleus. The protein localises to the cytoplasm. Its function is as follows. Component of the velvet transcription factor complex that controls sexual/asexual developmental ratio in response to light, promoting sexual development in the darkness while stimulating asexual sporulation under illumination. The velvet complex hat acts as a global regulator for secondary metabolite gene expression. Controls the expression of the oxalic acid and melanin gene clusters. Also controls the expression of proteases and carbohydrate-active enzymes. Involved in the resistance to oxidative stress. Required for full virulence. The sequence is that of Developmental and secondary metabolism regulator VEL1 from Botryotinia fuckeliana (strain B05.10) (Noble rot fungus).